Consider the following 355-residue polypeptide: MPMTVVSGRFSTALLPTCFSLSRLHSVKYAAQRRVVFVSRSAHASSASVSVETNSNSNVDFVIEKKDKNRGEKKILACPICYNSLAWISQPNGLIESAASGIQVQCNTCKRSYSGNETHLDLAVASGSKRYSEPMPLSTELFRTPLVSFLYERGWRQNFIWGGFPGPEKEFEMAKAYLKPVLGGNIIDASCGSGMFSRLFTRSDLFSLVIALDYSENMLRQCYELLNKEENFPNKEKLVLVRADIARLPFLSGSVDAVHAGAALHCWPSPSSAVAEISRVLRPGGVFVATTFIYDGPFSFIPFLKNLRQEIMRYSGSHIFLNERELEDICKACGLVNFTRVRNGPFIMLSATKPS.

The transit peptide at 1-49 (MPMTVVSGRFSTALLPTCFSLSRLHSVKYAAQRRVVFVSRSAHASSASV) directs the protein to the chloroplast.

Belongs to the methyltransferase superfamily.

It is found in the plastid. Its subcellular location is the chloroplast. The protein resides in the plastoglobule. This is an uncharacterized protein from Arabidopsis thaliana (Mouse-ear cress).